An 864-amino-acid polypeptide reads, in one-letter code: Probable beta-glucosidase J (864 aa).

D233 is an active-site residue. In terms of domain architecture, PA14 spans 411-578; sequence TGEPGYTFRV…DTDAAIQQAV (168 aa). 3 N-linked (GlcNAc...) asparagine glycosylation sites follow: N434, N447, and N503.

This sequence belongs to the glycosyl hydrolase 3 family.

It localises to the secreted. It catalyses the reaction Hydrolysis of terminal, non-reducing beta-D-glucosyl residues with release of beta-D-glucose.. It functions in the pathway glycan metabolism; cellulose degradation. Beta-glucosidases are one of a number of cellulolytic enzymes involved in the degradation of cellulosic biomass. Catalyzes the last step releasing glucose from the inhibitory cellobiose. In Neosartorya fischeri (strain ATCC 1020 / DSM 3700 / CBS 544.65 / FGSC A1164 / JCM 1740 / NRRL 181 / WB 181) (Aspergillus fischerianus), this protein is Probable beta-glucosidase J (bglJ).